Consider the following 196-residue polypeptide: Large ribosomal subunit protein eL15 (196 aa).

Residues 69-98 are compositionally biased toward basic residues; sequence RKGGSRKQRHKAGRRSKRQGVNRLSRRKSI. Disordered regions lie at residues 69–100 and 161–196; these read RKGG…SIQR and FRGL…RQGK. Residues 186 to 196 are compositionally biased toward polar residues; it reads PSVTGNDRQGK.

Belongs to the eukaryotic ribosomal protein eL15 family.

The protein is Large ribosomal subunit protein eL15 of Halorubrum lacusprofundi (strain ATCC 49239 / DSM 5036 / JCM 8891 / ACAM 34).